A 179-amino-acid polypeptide reads, in one-letter code: Photosystem I assembly protein Ycf4 (179 aa).

2 helical membrane passes run L21–V41 and I59–I79.

This sequence belongs to the Ycf4 family.

It localises to the plastid. Its subcellular location is the chloroplast thylakoid membrane. Its function is as follows. Seems to be required for the assembly of the photosystem I complex. The polypeptide is Photosystem I assembly protein Ycf4 (Rhodomonas salina (Cryptomonas salina)).